We begin with the raw amino-acid sequence, 227 residues long: Cytochrome c oxidase subunit 2 (227 aa).

Over 1–26 (MATWSNFNLQNSASPLMEQIIFFHDH) the chain is Mitochondrial intermembrane. A helical membrane pass occupies residues 27–51 (TLVILIMITILVGYLMISLFFNSYI). Topologically, residues 52–62 (NRFLLEGQMIE) are mitochondrial matrix. A helical transmembrane segment spans residues 63–81 (LIWTILPAITLIFIALPSL). Residues 82–227 (RLLYLLDELN…NFINWINNYS (146 aa)) lie on the Mitochondrial intermembrane side of the membrane. The Cu cation site is built by histidine 161, cysteine 196, glutamate 198, cysteine 200, histidine 204, and methionine 207. Glutamate 198 serves as a coordination point for Mg(2+).

Belongs to the cytochrome c oxidase subunit 2 family. In terms of assembly, component of the cytochrome c oxidase (complex IV, CIV), a multisubunit enzyme composed of a catalytic core of 3 subunits and several supernumerary subunits. The complex exists as a monomer or a dimer and forms supercomplexes (SCs) in the inner mitochondrial membrane with ubiquinol-cytochrome c oxidoreductase (cytochrome b-c1 complex, complex III, CIII). The cofactor is Cu cation.

It localises to the mitochondrion inner membrane. It carries out the reaction 4 Fe(II)-[cytochrome c] + O2 + 8 H(+)(in) = 4 Fe(III)-[cytochrome c] + 2 H2O + 4 H(+)(out). Its function is as follows. Component of the cytochrome c oxidase, the last enzyme in the mitochondrial electron transport chain which drives oxidative phosphorylation. The respiratory chain contains 3 multisubunit complexes succinate dehydrogenase (complex II, CII), ubiquinol-cytochrome c oxidoreductase (cytochrome b-c1 complex, complex III, CIII) and cytochrome c oxidase (complex IV, CIV), that cooperate to transfer electrons derived from NADH and succinate to molecular oxygen, creating an electrochemical gradient over the inner membrane that drives transmembrane transport and the ATP synthase. Cytochrome c oxidase is the component of the respiratory chain that catalyzes the reduction of oxygen to water. Electrons originating from reduced cytochrome c in the intermembrane space (IMS) are transferred via the dinuclear copper A center (CU(A)) of subunit 2 and heme A of subunit 1 to the active site in subunit 1, a binuclear center (BNC) formed by heme A3 and copper B (CU(B)). The BNC reduces molecular oxygen to 2 water molecules using 4 electrons from cytochrome c in the IMS and 4 protons from the mitochondrial matrix. The sequence is that of Cytochrome c oxidase subunit 2 (COII) from Choristoneura fumiferana (Spruce budworm moth).